Here is a 503-residue protein sequence, read N- to C-terminus: UDP-N-acetylmuramoylalanine--D-glutamate ligase (503 aa).

129 to 135 (GTNGKTT) is an ATP binding site.

Belongs to the MurCDEF family.

The protein localises to the cytoplasm. The enzyme catalyses UDP-N-acetyl-alpha-D-muramoyl-L-alanine + D-glutamate + ATP = UDP-N-acetyl-alpha-D-muramoyl-L-alanyl-D-glutamate + ADP + phosphate + H(+). It participates in cell wall biogenesis; peptidoglycan biosynthesis. Functionally, cell wall formation. Catalyzes the addition of glutamate to the nucleotide precursor UDP-N-acetylmuramoyl-L-alanine (UMA). The sequence is that of UDP-N-acetylmuramoylalanine--D-glutamate ligase from Burkholderia orbicola (strain MC0-3).